The sequence spans 179 residues: UPF0316 protein Ping_1367 (179 aa).

Helical transmembrane passes span 28–48 and 55–75; these read FLASFIGFFEIIIWLVASAQV and WYLALAYASGFSVGNYAGISI.

Belongs to the UPF0316 family.

The protein resides in the cell membrane. The chain is UPF0316 protein Ping_1367 from Psychromonas ingrahamii (strain DSM 17664 / CCUG 51855 / 37).